A 179-amino-acid chain; its full sequence is Large ribosomal subunit protein uL6 (179 aa).

The protein belongs to the universal ribosomal protein uL6 family. As to quaternary structure, part of the 50S ribosomal subunit.

This protein binds to the 23S rRNA, and is important in its secondary structure. It is located near the subunit interface in the base of the L7/L12 stalk, and near the tRNA binding site of the peptidyltransferase center. The protein is Large ribosomal subunit protein uL6 of Desulfovibrio desulfuricans (strain ATCC 27774 / DSM 6949 / MB).